Here is a 684-residue protein sequence, read N- to C-terminus: Coiled-coil domain-containing protein 62 (684 aa).

2 coiled-coil regions span residues 11–160 (RQNI…QALT) and 199–322 (TCIV…ESKA). The tract at residues 579–603 (SLGSSKSALREDETESSSNKKNSPT) is disordered. Over residues 594-603 (SSSNKKNSPT) the composition is skewed to polar residues. 2 consecutive short sequence motifs (LXXLL motif) follow at residues 634 to 638 (LQRLL) and 650 to 654 (LSTLL). The tract at residues 657–684 (SHENLTGSATNKSEVPEESAQKNTFVSY) is disordered. Polar residues predominate over residues 659 to 669 (ENLTGSATNKS).

In terms of assembly, interacts with ESR1 and ESR2 in the presence of estradiol/E2. The interaction with ESR2 recruits CCDC62 to ER target genes, including cyclin-D1/CCND1 AP-1 promoter. Interacts with GOPC. In terms of tissue distribution, highly expressed in adult testis. Expressed in both prostate epithelial and stromal cells, with predominant expression in epithelial cells (at protein level). Not detected in prostate by RT-PCR. Overexpressed in various cancers.

Its subcellular location is the cytoplasm. The protein localises to the nucleus. It is found in the cytoplasmic vesicle. The protein resides in the secretory vesicle. It localises to the acrosome. Its function is as follows. Nuclear receptor coactivator that can enhance preferentially estrogen receptors ESR1 and ESR2 transactivation. Also modulates progesterone/PGR, glucocorticoid/NR3C1 and androgen/AR receptors transactivation, although at lower level; little effect on vitamin D receptor/VDR. Required for normal spermiogenesis. It probably plays a role in acrosome formation. This Homo sapiens (Human) protein is Coiled-coil domain-containing protein 62 (CCDC62).